A 148-amino-acid polypeptide reads, in one-letter code: FAD synthase (148 aa).

ATP contacts are provided by residues 14–15 (VF), 19–22 (HVGH), and Asp100.

The protein belongs to the archaeal FAD synthase family. As to quaternary structure, homodimer. Requires a divalent metal cation as cofactor.

The catalysed reaction is FMN + ATP + H(+) = FAD + diphosphate. Its pathway is cofactor biosynthesis; FAD biosynthesis; FAD from FMN: step 1/1. Functionally, catalyzes the transfer of the AMP portion of ATP to flavin mononucleotide (FMN) to produce flavin adenine dinucleotide (FAD) coenzyme. The protein is FAD synthase of Thermococcus sibiricus (strain DSM 12597 / MM 739).